A 222-amino-acid polypeptide reads, in one-letter code: Probable transaldolase (222 aa).

Catalysis depends on K91, which acts as the Schiff-base intermediate with substrate.

This sequence belongs to the transaldolase family. Type 3B subfamily.

The protein resides in the cytoplasm. It carries out the reaction D-sedoheptulose 7-phosphate + D-glyceraldehyde 3-phosphate = D-erythrose 4-phosphate + beta-D-fructose 6-phosphate. It functions in the pathway carbohydrate degradation; pentose phosphate pathway; D-glyceraldehyde 3-phosphate and beta-D-fructose 6-phosphate from D-ribose 5-phosphate and D-xylulose 5-phosphate (non-oxidative stage): step 2/3. Its function is as follows. Transaldolase is important for the balance of metabolites in the pentose-phosphate pathway. In Chlorobium limicola (strain DSM 245 / NBRC 103803 / 6330), this protein is Probable transaldolase.